The sequence spans 336 residues: Flap endonuclease 1 (336 aa).

Residues 1-98 (MGADIGDLFE…AEIEERKKRR (98 aa)) are N-domain. Mg(2+)-binding residues include Asp27, Asp80, Glu151, Glu153, Asp172, Asp174, and Asp235. An I-domain region spans residues 115-256 (DAKKYAQAAG…KALNYIKTYG (142 aa)). Positions 328–336 (TQATLERWF) are interaction with PCNA.

The protein belongs to the XPG/RAD2 endonuclease family. FEN1 subfamily. Interacts with PCNA. PCNA stimulates the nuclease activity without altering cleavage specificity. The cofactor is Mg(2+).

Its function is as follows. Structure-specific nuclease with 5'-flap endonuclease and 5'-3' exonuclease activities involved in DNA replication and repair. During DNA replication, cleaves the 5'-overhanging flap structure that is generated by displacement synthesis when DNA polymerase encounters the 5'-end of a downstream Okazaki fragment. Binds the unpaired 3'-DNA end and kinks the DNA to facilitate 5' cleavage specificity. Cleaves one nucleotide into the double-stranded DNA from the junction in flap DNA, leaving a nick for ligation. Also involved in the base excision repair (BER) pathway. Acts as a genome stabilization factor that prevents flaps from equilibrating into structures that lead to duplications and deletions. Also possesses 5'-3' exonuclease activity on nicked or gapped double-stranded DNA. The sequence is that of Flap endonuclease 1 from Archaeoglobus fulgidus (strain ATCC 49558 / DSM 4304 / JCM 9628 / NBRC 100126 / VC-16).